Consider the following 306-residue polypeptide: Large ribosomal subunit protein mL45 (306 aa).

It belongs to the mitochondrion-specific ribosomal protein mL45 family. Component of the mitochondrial ribosome large subunit (39S) which comprises a 16S rRNA and about 50 distinct proteins.

It is found in the mitochondrion. In terms of biological role, component of the mitochondrial large ribosomal subunit (mt-LSU). Within the mitochondrial ribosomes, required to direct the nascent polypeptide toward the tunnel exit and position the exit at a distance from the membrane surface. This is Large ribosomal subunit protein mL45 (MRPL45) from Bos taurus (Bovine).